The following is an 818-amino-acid chain: Phosphoenolpyruvate synthase (818 aa).

The active-site Tele-phosphohistidine intermediate is H442. The substrate site is built by R532, R601, E703, G724, S725, N726, and D727. E703 contacts Mg(2+). D727 contacts Mg(2+). Residue C774 is the Proton donor of the active site.

It belongs to the PEP-utilizing enzyme family. Mg(2+) is required as a cofactor.

The catalysed reaction is pyruvate + ATP + H2O = phosphoenolpyruvate + AMP + phosphate + 2 H(+). It functions in the pathway carbohydrate biosynthesis; gluconeogenesis. Functionally, catalyzes the phosphorylation of pyruvate to phosphoenolpyruvate. The chain is Phosphoenolpyruvate synthase (ppsA) from Synechocystis sp. (strain ATCC 27184 / PCC 6803 / Kazusa).